A 463-amino-acid polypeptide reads, in one-letter code: Ribosome biogenesis protein NSA1 (463 aa).

The protein belongs to the NSA1 family. In terms of assembly, component of the pre-66S ribosomal particle. Interacts with NOP7, RRP1 and RRP5.

It localises to the nucleus. The protein localises to the nucleolus. Involved in the biogenesis of the 60S ribosomal subunit. The protein is Ribosome biogenesis protein NSA1 (NSA1) of Saccharomyces cerevisiae (strain ATCC 204508 / S288c) (Baker's yeast).